A 242-amino-acid chain; its full sequence is TLC domain-containing protein 5 (242 aa).

6 consecutive transmembrane segments (helical) span residues 3 to 23 (LFIVETSCSLISWLFLYLLLC), 37 to 57 (LVTLFHGILIICLTAYIGFIA), 74 to 94 (ILTLVLSLGYFLFDMAWCVYF), 109 to 129 (IFGILLALGLGESGIETCAVL), 154 to 174 (LAGDVVDLLFILLFASVRIGV), and 190 to 210 (LIVKVGGVAIYTLSWIFMVDI). Residues 28-219 (GRDSEWNCRL…IARFACRKTC (192 aa)) enclose the TLC domain.

It belongs to the TLCD5 family.

The protein resides in the membrane. The sequence is that of TLC domain-containing protein 5 (tlcd5) from Danio rerio (Zebrafish).